The sequence spans 144 residues: Putative acetyltransferase SAOUHSC_00995 (144 aa).

The N-acetyltransferase domain occupies 1–141 (MFSKVNNQKM…EHIEMTKKLT (141 aa)). Residues 71 to 73 (VAV), G79, and 112 to 114 (PFY) contribute to the CoA site.

Belongs to the UPF0039 (ElaA) family.

Could catalyze the transfer of an acetyl group from acetyl coenzyme A (AcCoA) to an acceptor substrate and release both CoA and the acetylated product. In Staphylococcus aureus (strain NCTC 8325 / PS 47), this protein is Putative acetyltransferase SAOUHSC_00995.